The chain runs to 490 residues: Actin-related protein 6 (490 aa).

This sequence belongs to the actin family. ARP6 subfamily.

It localises to the cytoplasm. It is found in the cytoskeleton. The protein is Actin-related protein 6 of Dictyostelium discoideum (Social amoeba).